The chain runs to 72 residues: UPF0270 protein KPK_0377 (72 aa).

The protein belongs to the UPF0270 family.

In Klebsiella pneumoniae (strain 342), this protein is UPF0270 protein KPK_0377.